The primary structure comprises 172 residues: Capsid protein (172 aa).

A disordered region spans residues 1-26 (MASKWNWSGTKGRRTPRRPYGRPYKS). Residues 11–20 (KGRRTPRRPY) show a composition bias toward basic residues.

This sequence belongs to the nanoviridae capsid protein family.

It is found in the virion. This Faba bean necrotic yellows virus (isolate Egyptian EV1-93) (FBNYV) protein is Capsid protein (DNA-S).